The sequence spans 350 residues: Phosphate acyltransferase (350 aa).

The protein belongs to the PlsX family. Homodimer. Probably interacts with PlsY.

It is found in the cytoplasm. It carries out the reaction a fatty acyl-[ACP] + phosphate = an acyl phosphate + holo-[ACP]. It participates in lipid metabolism; phospholipid metabolism. Its function is as follows. Catalyzes the reversible formation of acyl-phosphate (acyl-PO(4)) from acyl-[acyl-carrier-protein] (acyl-ACP). This enzyme utilizes acyl-ACP as fatty acyl donor, but not acyl-CoA. The sequence is that of Phosphate acyltransferase from Chelativorans sp. (strain BNC1).